A 124-amino-acid chain; its full sequence is Small ribosomal subunit protein eS25 (124 aa).

A compositionally biased stretch (basic and acidic residues) spans 1 to 22 (MPPKDSKQKKDTSKAKKDKDPV). The interval 1–37 (MPPKDSKQKKDTSKAKKDKDPVNKSGGKAKKKKWSKG) is disordered. Residues 27–37 (GKAKKKKWSKG) show a composition bias toward basic residues.

The protein belongs to the eukaryotic ribosomal protein eS25 family. As to quaternary structure, component of the small ribosomal subunit.

The protein localises to the cytoplasm. In terms of biological role, component of the small ribosomal subunit. The ribosome is a large ribonucleoprotein complex responsible for the synthesis of proteins in the cell. This chain is Small ribosomal subunit protein eS25 (rps25), found in Ictalurus punctatus (Channel catfish).